The primary structure comprises 100 residues: Urease subunit gamma (100 aa).

It belongs to the urease gamma subunit family. In terms of assembly, heterotrimer of UreA (gamma), UreB (beta) and UreC (alpha) subunits. Three heterotrimers associate to form the active enzyme.

It localises to the cytoplasm. It catalyses the reaction urea + 2 H2O + H(+) = hydrogencarbonate + 2 NH4(+). It participates in nitrogen metabolism; urea degradation; CO(2) and NH(3) from urea (urease route): step 1/1. The chain is Urease subunit gamma from Parasynechococcus marenigrum (strain WH8102).